The chain runs to 1452 residues: CLIP-associating protein 1 (1452 aa).

HEAT repeat units lie at residues 68 to 87 (LLGM…RFRS), 88 to 124 (QIGT…QASN), and 163 to 200 (LTLS…HVGE). A disordered region spans residues 239–299 (KNFDDEDSVD…GTAKEGAGGV (61 aa)). The span at 253–267 (SSASSSASSKAPQAA) shows a compositional bias: low complexity. 2 HEAT repeats span residues 407–442 (HGAE…IRQT) and 443–479 (HVPR…EWQT). Disordered stretches follow at residues 545-735 (SDSI…GISQ) and 771-792 (YGMY…ERSY). The segment covering 550–569 (SLPQSDRSSSSSQESLNRPL) has biased composition (low complexity). The segment covering 573–597 (RSPTGSTVSRASTATSKSTPGSLQR) has biased composition (polar residues). Composition is skewed to low complexity over residues 606 to 621 (AATC…ASAA), 645 to 659 (QSSG…TPAD), and 668 to 682 (VVSQ…SSPG). The span at 715 to 724 (QGCSRETSPS) shows a compositional bias: polar residues. Low complexity predominate over residues 781 to 792 (SDASSACSERSY). Residues 926 to 963 (QQFNILMRFIVDQTQTPNLKVKVAILKYIESLARQMDP) form an HEAT 6 repeat. The interval 1033–1076 (LKNSSNSSMGSPSNTIGRTPSRHSSSRASPLTSPTNCSHGGLSP) is disordered. A compositionally biased stretch (low complexity) spans 1034–1046 (KNSSNSSMGSPSN). A compositionally biased stretch (polar residues) spans 1058-1070 (SRASPLTSPTNCS). 2 HEAT repeats span residues 1256–1293 (EHFK…NQPA) and 1374–1411 (QILP…VIGE).

Belongs to the CLASP family. In terms of assembly, interacts (via C-terminus) with clip1/clip-170, and cenpe.

It is found in the cytoplasm. Its subcellular location is the cytoskeleton. The protein resides in the microtubule organizing center. The protein localises to the centrosome. It localises to the chromosome. It is found in the centromere. Its subcellular location is the kinetochore. The protein resides in the spindle. The protein localises to the golgi apparatus. It localises to the trans-Golgi network. Microtubule plus-end tracking protein that promotes the stabilization of dynamic microtubules during anaphase. Plays a crucial role in chromatin-induced microtubule formation. May also act at microtubule minus ends. May be involved in the nucleation of noncentrosomal microtubules originating from the trans-Golgi network (TGN). This chain is CLIP-associating protein 1, found in Xenopus tropicalis (Western clawed frog).